Here is a 543-residue protein sequence, read N- to C-terminus: Limonene hydroxylase (543 aa).

One can recognise a Sigma-54 factor interaction domain in the interval 232–464; sequence VVTYNPSFEK…LRNVIERAFL (233 aa). ATP contacts are provided by residues 260–267 and 324–333; these read GETGSGKE and ADGGTLFLDE.

It carries out the reaction (4S)-limonene + reduced [NADPH--hemoprotein reductase] + O2 = (1S,5R)-carveol + oxidized [NADPH--hemoprotein reductase] + H2O + H(+). It catalyses the reaction (4S)-limonene + reduced [NADPH--hemoprotein reductase] + O2 = (4S)-perillyl alcohol + oxidized [NADPH--hemoprotein reductase] + H2O + H(+). The enzyme catalyses perillyl alcohol + NAD(+) = perillyl aldehyde + NADH + H(+). The catalysed reaction is (1S,5R)-carveol + NADP(+) = (R)-carvone + NADPH + H(+). In terms of biological role, involved in limonene hydroxylation to a mixture of carveol and perillyl alcohol as well as in dehydrogenation of these products to carvone and perillyl aldehyde. Aromatic alcohols containing an isopropyl or isopropenyl group at ring position 4 also served as substrates for the dehydrogenase activity. The protein is Limonene hydroxylase of Geobacillus stearothermophilus (Bacillus stearothermophilus).